A 602-amino-acid polypeptide reads, in one-letter code: Elongation factor 4 (602 aa).

One can recognise a tr-type G domain in the interval 7-189 (SKIRNFCIIA…AIVRRVPPPQ (183 aa)). Residues 19 to 24 (DHGKST) and 136 to 139 (NKVD) contribute to the GTP site.

This sequence belongs to the TRAFAC class translation factor GTPase superfamily. Classic translation factor GTPase family. LepA subfamily.

It is found in the cell inner membrane. It carries out the reaction GTP + H2O = GDP + phosphate + H(+). Functionally, required for accurate and efficient protein synthesis under certain stress conditions. May act as a fidelity factor of the translation reaction, by catalyzing a one-codon backward translocation of tRNAs on improperly translocated ribosomes. Back-translocation proceeds from a post-translocation (POST) complex to a pre-translocation (PRE) complex, thus giving elongation factor G a second chance to translocate the tRNAs correctly. Binds to ribosomes in a GTP-dependent manner. The chain is Elongation factor 4 from Prochlorococcus marinus (strain MIT 9301).